The primary structure comprises 102 residues: Small ribosomal subunit protein eS24 (102 aa).

Belongs to the eukaryotic ribosomal protein eS24 family.

The chain is Small ribosomal subunit protein eS24 from Methanococcus maripaludis (strain DSM 14266 / JCM 13030 / NBRC 101832 / S2 / LL).